The sequence spans 4092 residues: MCKNEARLANELIEFVAATVTGIKNSPKENEQAFIDYLHCQYLERFQFFLGLLDGREFDTLFVFLFEELDRTIVTIDIGEEAIYDANLANKKYSTLLIIKSRSVIVDAEPIATQISAIYLPGPVNAGNLASIITHGVSSVFGQLIKSDTKTYSVETIDKTRRKLDDISKQFQQLHTSIETPDLLAMVPSIIKLAVSKGATSHDYANYLPSNDLESMRFLNILQSIANKWFLVLKQTLAIDRDIKNGSFLDEVEFWSNFYEVLKSLIEQTQSQEFQVCLSVLTNAKRFHNLTNLLNEGSLSDKFKLADKYNQFLSSIPIDEVRQASNLEDLQELFPVLASSLKKFRYSGYPVQRFVVLMDKISQEVMDAILSNLSDLFQLEYGSFLGLYEKSAGMIEEWDDIVQDVNLLIREDLRKRAPQELLIQKLTFTSASVKATLDEILSTRKRFFSLAETIKSISPSTYHEEIQRLYHPFEQIHDISVNFRLKLEQAESEFSKNMLDLEKKLQNTLASFMDSDHCPTEKLSYLVKFKPLMELCPRIKVKVLENQQILLLEIKKDIRQLETGLELLPKILHVEALNNIPPISARISYFLNVQSRIDNIVQYLEALFGSNWNDTLEGRSISTSIVQLRKETNPHDVFLHWLGNFPEKATANLLTTPILKLIRNNEDDYELKVNFDFALAAAYSELRSLTYMAFQVPSHIVRIARTYMYLYPRAINLVELIQTFFSLSKSLSYTFYTNIFLKRNVQTVWLLLQQILITPWESLQEESSEMSCSVHSLARLEKSIDGILSDYQILKNSEPQFAKEFSGLKSFDGTADDLHEVEEIISNIQAIFENLFTKGLTNVSDHISTFNNLIISIILEKVRLNLKKMHFPKHVLKLSFNEGRITSSPSLAAMKRSLLKDIEALLNKVVLINFLHDPDHPLSTTLTFNSLVIKLKDDIQNCIEQVQNLHCKINSYVKEWQKMEFLWQITEEAFLEVVDNSTQRCFGILKGLLDSQSKFDLIISRNNFSKNLVLHTEDAQRHIRSKMDSWILYVSKHLLTIYERDARKLHEDMNRDREAVEDMDINFTSLKNITVIIEAVNVNKRHLTERDIQIKLLGSVMRALTKLKVRFPSHFVYIDQLDNDFSSLRQSLSYVEQELQKHRVVIAKSLEEGVENINNLSQSLNESWSVRKPISPTLTPPEALKILEFFNESITKLKKKMHSVAAAAKMLLIPVVLNDQLTHVVEEVKTYDLVWRSIKNLWEDVQRTFETPWCRVDVLLLQSDLANFLRRADELPRAVKQFEMYKSLFSQVNMLTSVNKILVELKDGALKPRHWNMIFRDIGKRQIQKNLLDKLEFSLKDVMVLNLTLNEILLTKIIERAQKEFVIEKSLNRIKKFWKEAQYEVIEHSSGLKLVREWDVLEQACKEDLEELVSMKASNYYKIFEQDCLDLESKLTKLSEIQVNWVEVQFYWLDLYGILGENLDIQNFLPLETSKFKSLTSEYKMITTRAFQLDTTIEVIHIPNFDTTLKLTIDSLKMIKSSLSTFLERQRRQFPRFYFLGNDDLLKIIGSGKHHDQVSKFMKKMFGSIESIIFLEDFITGVRSVEGEVLNLNEKIELKDSIQAQEWLNILDTEIKLSVFTQFRDCLGQLKDGTDIEVVVSKYIFQAILLSAQVMWTELVEKCLQTNQFSKYWKEVDMKIKGLLDKLNKSSDNVKKKIEALLVEYLHFNNVIGQLKNCSTKEEARLLWAKVQKFYQKNDTLDDLNSVFISQSGYLLQYKFEYIGIPERLIYTPLLLIGFATLTDSLHQKYGGCFFGPAGTGKTETVKAFGQNLGRVVVVFNCDDSFDYQVLSRLLVGITQIGAWGCFDEFNRLDEKVLSAVSANIQQIQNGLQVGKSHITLLEEETPLSPHTAVFITLNPGYNGRSELPENLKKSFREFSMKSPQSGTIAEMILQIMGFEDSKSLASKIVHFLELLSSKCSSMNHYHFGLRTLKGVLRNCSPLISEFGEGEKTVVESLKRVILPSLGDTDELVFKDELSKIFDSAGTPLNSKAIVQCLKDAGQRSGFSMSEEFLKKCMQFYYMQKTQQALILVGKAGCGKTATWKTVIDAMAIFDGHANVVYVIDTKVLTKESLYGSMLKATLEWRDGLFTSILRRVNDDITGTFKNSRIWVVFDSDLDPEYVEAMNSVLDDNKILTLPNGERLPIPPNFRILFETDNLDHTTPATITRCGLLWFSTDVCSISSKIDHLLNKSYEALDNKLSMFELDKLKDLISDSFDMASLTNIFTCSNDLVHILGVRTFNKLETAVQLAVHLISSYRQWFQNLDDKSLKDVITLLIKRSLLYALAGDSTGESQRAFIQTINTYFGHDSQELSDYSTIVIANDKLSFSSFCSEIPSVSLEAHEVMRPDIVIPTIDTIKHEKIFYDLLNSKRGIILCGPPGSGKTMIMNNALRNSSLYDVVGINFSKDTTTEHILSALHRHTNYVTTSKGLTLLPKSDIKNLVLFCDEINLPKLDKYGSQNVVLFLRQLMEKQGFWKTPENKWVTIERIHIVGACNPPTDPGRIPMSERFTRHAAILYLGYPSGKSLSQIYEIYYKAIFKLVPEFRSYTEPFARASVHLYNECKARYSTGLQSHYLFSPRELTRLVRGVYTAINTGPRQTLRSLIRLWAYEAWRIFADRLVGVKEKNSFEQLLYETVDKYLPNQDLGNISSTSLLFSGLLSLDFKEVNKTDLVNFIEERFKTFCDEELEVPMVIHESMVDHILRIDRALKQVQGHMMLIGASRTGKTILTRFVAWLNGLKIVQPKIHRHSNLSDFDMILKKAISDCSLKESRTCLIIDESNILETAFLERMNTLLANADIPDLFQGEEYDKLLNNLRNKTRSLGLLLDTEQELYDWFVGEIAKNLHVVFTICDPTNNKSSAMISSPALFNRCIINWMGDWDTKTMSQVANNMVDVIPMEFTDFIVPEVNKELVFTEPIQTIRDAVVNILIHFDRNFYQKMKVGVNPRSPGYFIDGLRALVKLVTAKYQDLQENQRFVNVGLEKLNESVLKVNELNKTLSKKSTELTEKEKEARSTLDKMLMEQNESERKQEATEEIKKILKVQEEDIRKRKEVVMKSIQDIEPTILEAQRGVKNIKKQQLTEIRSMVNPPSGVKIVMEAVCAILGYQFSNWRDIQQFIRKDDFIHNIVHYDTTLHMKPQIRKYMEEEFLSDPNFTYETINRASKACGPLYQWVNAQINFSKVLENVDPLRQEMKRIEFESLKTKANLLAAEEMTQDLEASIEVSKRKYSLLIRDVEAIKTEMSNVQANLDRSISLVKSLTFEKERWLNTTKQFSKTSQELIGNCIISSIYETYFGHLNERERADMLVILKRLLGKFAVKYDVNYRFIDYLVTLDEKMKWLECGLDKNDYFLENMSIVMNSQDAVPFLLDPSSHMITVISNYYGNKTVLLSFLEEGFVKRLENAIRFGSVVIIQDGEFFDPIISRLISREFNHAGNRVTVEIGDHEVDVSGDFKLFIHSCDPSGDIPIFLRSRVRLVHFVTNKESIETRIFDITLTEENAEMQRKREDLIKLNTEYKLKLKNLEKRLLEELNNSQGNMLENDELMVTLNNLKKEAMNIEKKLSESEEFFPQFDNLVEEYSIIGKHSVKIFSMLEKFGQFHWFYGISIGQFLSCFKRVFIKKSRETRAARTRVDEILWLLYQEVYCQFSTALDKKFKMIMAMTMFCLYKFDIESEQYKEAVLTMIGVLSESSDGVPKLTVDTNNDLRYLWDYVTTKSYISALNWFKNEFFVDEWNIADVVANSENNYFTMASERDVDGTFKLIELAKASKESLKIIPLGSIENLNYAQEEISKSKIEGGWILLQNIQMSLSWVKTYLHKHVEETKAAEEHEKFKMFMTCHLTGDKLPAPLLQRTDRFVYEDIPGILDTVKDLWGSQFFTGKISGVWSVYCTFLLSWFHALITARTRLVPHGFSKKYYFNDCDFQFASVYLENVLATNSTNNIPWAQVRDHIATIVYGGKIDEEKDLEVVAKLCAHVFCGSDNLQIVPGVRIPQPLLQQSEEEERARLTAILSNTIEPADSLSSWLQLPRESILNYERLQAKEVASSTEQLLQEM.

The segment at 1–1757 (MCKNEARLAN…FISQSGYLLQ (1757 aa)) is stem. Coiled-coil stretches lie at residues 154–175 (VETI…QQLH), 486–508 (KLEQ…LQNT), 542–566 (KVLE…TGLE), 932–959 (VIKL…YVKE), 1042–1063 (YERD…VEDM), and 1681–1705 (KGLL…LVEY). AAA regions lie at residues 1758–1979 (YKFE…VLRN), 2036–2273 (QCLK…NDLV), 2379–2628 (SLEA…LVRG), and 2722–2984 (TFCD…KVGV). ATP-binding positions include 1796–1803 (GPAGTGKT), 2074–2081 (GKAGCGKT), 2418–2425 (GPPGSGKT), and 2760–2767 (GASRTGKT). Coiled coils occupy residues 2993 to 3092 (IDGL…KRKE), 3242 to 3300 (KTKA…KSLT), and 3532 to 3608 (ITLT…EEFF). Residues 2993-3300 (IDGLRALVKL…RSISLVKSLT (308 aa)) are stalk. 2 AAA regions span residues 3370–3599 (LVTL…NIEK) and 3760–3970 (LNWF…YLEN).

The protein belongs to the dynein heavy chain family. In terms of assembly, the dynein complex consists of at least two heavy chains and a number of intermediate and light chains. Interacts with DYN3.

It localises to the cytoplasm. The protein localises to the cytoskeleton. Its function is as follows. Cytoplasmic dynein acts as a motor for the intracellular retrograde motility of vesicles and organelles along microtubules. Dynein has ATPase activity; the force-producing power stroke is thought to occur on release of ADP. Required to maintain uniform nuclear distribution in hyphae. May play an important role in the proper orientation of the mitotic spindle into the budding daughter cell yeast. Probably required for normal progression of the cell cycle. In Saccharomyces cerevisiae (strain ATCC 204508 / S288c) (Baker's yeast), this protein is Dynein heavy chain, cytoplasmic (DYN1).